The primary structure comprises 388 residues: MANDYFFTSESVSEGHPDKVADQISDAILDAILAQDPTARVAAETLCNTGLVVLAGEITTHANVDYIQVARNTLREIGYDNTDYGIDYKGCAVLVAYDKQSPDIAQGVDKAHDDGLDQGAGDQGLMFGYACDETSELMPMPIHLSHRLVERQSQLRRDGRLNWLRPDAKSQVTLRYVDGKPDSIDTVVLSTQHDEEISLEKLREAVIEEIIKPVLPKHLIKGAINFLVNPTGRFVIGGPQGDCGLTGRKIIVDTYGGAAPHGGGAFSGKDPSKVDRSAAYAGRYVAKNVVAAGLASKCLIQISYAIGVAKPTSVMVSTFGTGKISDEKIAQLVSENFDLRPKGIVKMLNLLRPIYRKTAAYGHFGREEPEFTWEQTDKAAALRAAAGL.

ATP is bound at residue His16. Residue Asp18 coordinates Mg(2+). Glu44 provides a ligand contact to K(+). L-methionine contacts are provided by Glu57 and Gln100. The interval 100 to 110 (QSPDIAQGVDK) is flexible loop. Residues 167 to 169 (DAK), 233 to 234 (RF), Asp242, 248 to 249 (RK), Ala265, and Lys269 each bind ATP. Position 242 (Asp242) interacts with L-methionine. Lys273 contributes to the L-methionine binding site.

The protein belongs to the AdoMet synthase family. As to quaternary structure, homotetramer; dimer of dimers. Requires Mg(2+) as cofactor. It depends on K(+) as a cofactor.

The protein localises to the cytoplasm. The enzyme catalyses L-methionine + ATP + H2O = S-adenosyl-L-methionine + phosphate + diphosphate. Its pathway is amino-acid biosynthesis; S-adenosyl-L-methionine biosynthesis; S-adenosyl-L-methionine from L-methionine: step 1/1. Its function is as follows. Catalyzes the formation of S-adenosylmethionine (AdoMet) from methionine and ATP. The overall synthetic reaction is composed of two sequential steps, AdoMet formation and the subsequent tripolyphosphate hydrolysis which occurs prior to release of AdoMet from the enzyme. This Polynucleobacter asymbioticus (strain DSM 18221 / CIP 109841 / QLW-P1DMWA-1) (Polynucleobacter necessarius subsp. asymbioticus) protein is S-adenosylmethionine synthase.